Consider the following 788-residue polypeptide: Integrin beta-3 (788 aa).

A signal peptide spans 1–26 (MRARPRPRPLWATVLALGALAGVGVG). Residues 27-718 (GPNICTTRGV…EEPECPKGPD (692 aa)) lie on the Extracellular side of the membrane. One can recognise a PSI domain in the interval 30 to 76 (ICTTRGVSSCQQCLAVSPMCAWCSDEALPLGSPRCDLKENLLKDNCA). 19 cysteine pairs are disulfide-bonded: cysteine 31-cysteine 49, cysteine 39-cysteine 461, cysteine 42-cysteine 64, cysteine 52-cysteine 75, cysteine 203-cysteine 210, cysteine 258-cysteine 299, cysteine 400-cysteine 412, cysteine 432-cysteine 459, cysteine 463-cysteine 483, cysteine 474-cysteine 486, cysteine 488-cysteine 497, cysteine 499-cysteine 529, cysteine 512-cysteine 527, cysteine 521-cysteine 532, cysteine 534-cysteine 547, cysteine 549-cysteine 570, cysteine 554-cysteine 568, cysteine 562-cysteine 573, and cysteine 575-cysteine 584. A glycan (N-linked (GlcNAc...) asparagine) is linked at asparagine 125. The VWFA domain maps to 135-377 (DYPVDIYYLM…QLIVDAYGKI (243 aa)). Positions 147 and 149 each coordinate Mg(2+). 4 residues coordinate Ca(2+): serine 149, aspartate 152, aspartate 153, and aspartate 184. The segment at 203–210 (CYDMKTTC) is involved in CX3CL1-, NRG1-, FGF1- and IGF1-binding. Ca(2+) contacts are provided by asparagine 241, aspartate 243, proline 245, glutamate 246, and aspartate 277. Residue glutamate 246 coordinates Mg(2+). The CX3CL1-binding stretch occupies residues 293–313 (QPNDGQCHVGSDNHYSASTTM). N-linked (GlcNAc...) asparagine glycosylation occurs at asparagine 346. A Ca(2+)-binding site is contributed by methionine 361. A glycan (N-linked (GlcNAc...) asparagine) is linked at asparagine 397. I-EGF domains are found at residues 463–498 (CQAQAEPNSHRCNNGNGTFECGVCRCGPGWLGSQCE), 499–548 (CSEE…KYCE), 549–585 (CDDFSCVRYKGEMCSGHGQCSCGDCLCDSDWTGYYCN), and 586–625 (CTTRTDTCMSSNGLLCSGRGKCECGSCVCIQPGSYGDTCE). An N-linked (GlcNAc...) asparagine glycan is attached at asparagine 478. Residue asparagine 585 is glycosylated (N-linked (GlcNAc...) asparagine). 9 cysteine pairs are disulfide-bonded: cysteine 586–cysteine 609, cysteine 593–cysteine 607, cysteine 601–cysteine 612, cysteine 614–cysteine 624, cysteine 627–cysteine 630, cysteine 634–cysteine 681, cysteine 640–cysteine 661, cysteine 643–cysteine 657, and cysteine 689–cysteine 713. N-linked (GlcNAc...) asparagine glycosylation occurs at asparagine 680. The chain crosses the membrane as a helical span at residues 719–741 (ILVVLLSVMGAILLIGLAALLIW). The Cytoplasmic segment spans residues 742-788 (KLLITIHDRKEFAKFEEERARAKWDTANNPLYKEATSTFTNITYRGT). Threonine 767 carries the post-translational modification Phosphothreonine. Residue tyrosine 773 is modified to Phosphotyrosine. The LIR motif lies at 777-783 (TSTFTNI). A Phosphothreonine; by PDPK1 and PKB/AKT1; in vitro modification is found at threonine 779. Tyrosine 785 is subject to Phosphotyrosine.

This sequence belongs to the integrin beta chain family. Heterodimer of an alpha and a beta subunit. Beta-3 (ITGB3) associates with either alpha-IIb (ITGA2B) or alpha-V (ITGAV). Isoform Beta-3C interacts with FLNB. Interacts with COMP. Interacts with PDIA6 following platelet stimulation. Interacts with SYK; upon activation by ITGB3 promotes platelet adhesion. Interacts with MYO10. Interacts with DAB2. Interacts with FERMT2. Interacts with EMP2; regulates the levels of the heterodimer ITGA5:ITGB3 integrin expression on the plasma membrane. Integrin ITGAV:ITGB3 interacts with FBLN5 (via N-terminus). ITGAV:ITGB3 interacts with CCN3. ITGAV:ITGB3 and ITGA2B:ITGB3 interact with SELP (via C-type lectin domain); the interaction mediates cell-cell interaction and adhesion. ITGAV:ITGB3 is found in a ternary complex with CX3CR1 and CX3CL1. ITGAV:ITGB3 is found in a ternary complex with NRG1 and ERBB3. ITGAV:ITGB3 is found in a ternary complex with FGF1 and FGFR1. ITGAV:ITGB3 interacts with FGF2; it is likely that FGF2 can simultaneously bind ITGAV:ITGB3 and FGF receptors. ITGAV:ITGB3 binds to IL1B. ITGAV:ITGB3 is found in a ternary complex with IGF1 and IGF1R. ITGAV:ITGB3 interacts with IGF2. ITGAV:ITGB3 interacts with FBN1. ITGAV:ITGB3 interacts with CD9, CD81 and CD151 (via second extracellular domain). Interacts (via the allosteric site (site 2)) with CXCL12 in a CXCR4-independent manner. Interacts with MXRA8/DICAM; the interaction inhibits ITGAV:ITGB3 heterodimer formation. ITGAV:ITGB3 interacts with PTN. Forms a complex with PTPRZ1 and PTN that stimulates endothelial cell migration through ITGB3 Tyr-773 phosphorylation. ITGAV:ITGB3 interacts with SLC6A4. Interacts with SLC6A4 (via C-terminus); this interaction regulates SLC6A4 trafficking. ITGA2B:ITGB3 interacts with PPIA/CYPA; the interaction is ROS and PPIase activity-dependent and is increased in the presence of thrombin. Interacts with tensin TNS3; TNS3 also interacts with PEAK1, thus acting as an adapter molecule to bridge the association of PEAK1 with ITGB3. Interacts with TM4SF19. As to quaternary structure, (Microbial infection) Integrin ITGAV:ITGB3 interacts with herpes virus 8/HHV-8 glycoprotein B. In terms of assembly, (Microbial infection) Integrin ITGAV:ITGB3 interacts with coxsackievirus A9 capsid proteins. (Microbial infection) Interacts with Hantaan virus glycoprotein G. As to quaternary structure, (Microbial infection) Integrin ITGAV:ITGB3 interacts with cytomegalovirus/HHV-5 gH:gL proteins. In terms of assembly, (Microbial infection) Integrin ITGA5:ITGB3 interacts with human metapneumovirus fusion protein. (Microbial infection) Integrin ITGAV:ITGB3 interacts with human parechovirus 1 capsid proteins. As to quaternary structure, (Microbial infection) Integrin ITGAV:ITGB3 interacts with west nile virus envelope protein E. In terms of assembly, (Microbial infection) Interacts with HIV-1 Tat. ITGAV:ITGB3 interacts with AGRA2. Phosphorylated on tyrosine residues in response to thrombin-induced platelet aggregation. Probably involved in outside-in signaling. A peptide (AA 740-762) is capable of binding GRB2 only when both Tyr-773 and Tyr-785 are phosphorylated. Phosphorylation of Thr-779 inhibits SHC binding. As to expression, isoform beta-3A and isoform beta-3C are widely expressed. Isoform beta-3A is specifically expressed in osteoblast cells; isoform beta-3C is specifically expressed in prostate and testis.

It localises to the cell membrane. Its subcellular location is the cell projection. It is found in the lamellipodium membrane. The protein localises to the cell junction. The protein resides in the focal adhesion. It localises to the postsynaptic cell membrane. Its subcellular location is the synapse. In terms of biological role, integrin alpha-V/beta-3 (ITGAV:ITGB3) is a receptor for cytotactin, fibronectin, laminin, matrix metalloproteinase-2, osteopontin, osteomodulin, prothrombin, thrombospondin, vitronectin and von Willebrand factor. Integrin alpha-IIb/beta-3 (ITGA2B:ITGB3) is a receptor for fibronectin, fibrinogen, plasminogen, prothrombin, thrombospondin and vitronectin. Integrins alpha-IIb/beta-3 and alpha-V/beta-3 recognize the sequence R-G-D in a wide array of ligands. Integrin alpha-IIb/beta-3 recognizes the sequence H-H-L-G-G-G-A-K-Q-A-G-D-V in fibrinogen gamma chain. Following activation integrin alpha-IIb/beta-3 brings about platelet/platelet interaction through binding of soluble fibrinogen. This step leads to rapid platelet aggregation which physically plugs ruptured endothelial surface. Fibrinogen binding enhances SELP expression in activated platelets. ITGAV:ITGB3 binds to fractalkine (CX3CL1) and acts as its coreceptor in CX3CR1-dependent fractalkine signaling. ITGAV:ITGB3 binds to NRG1 (via EGF domain) and this binding is essential for NRG1-ERBB signaling. ITGAV:ITGB3 binds to FGF1 and this binding is essential for FGF1 signaling. ITGAV:ITGB3 binds to FGF2 and this binding is essential for FGF2 signaling. ITGAV:ITGB3 binds to IGF1 and this binding is essential for IGF1 signaling. ITGAV:ITGB3 binds to IGF2 and this binding is essential for IGF2 signaling. ITGAV:ITGB3 binds to IL1B and this binding is essential for IL1B signaling. ITGAV:ITGB3 binds to PLA2G2A via a site (site 2) which is distinct from the classical ligand-binding site (site 1) and this induces integrin conformational changes and enhanced ligand binding to site 1. ITGAV:ITGB3 acts as a receptor for fibrillin-1 (FBN1) and mediates R-G-D-dependent cell adhesion to FBN1. In brain, plays a role in synaptic transmission and plasticity. Involved in the regulation of the serotonin neurotransmission, is required to localize to specific compartments within the synapse the serotonin receptor SLC6A4 and for an appropriate reuptake of serotonin. Controls excitatory synaptic strength by regulating GRIA2-containing AMPAR endocytosis, which affects AMPAR abundance and composition. ITGAV:ITGB3 act as a receptor for CD40LG. ITGAV:ITGB3 acts as a receptor for IBSP and promotes cell adhesion and migration to IBSP. (Microbial infection) Integrin ITGAV:ITGB3 acts as a receptor for Herpes virus 8/HHV-8. Functionally, (Microbial infection) Integrin ITGAV:ITGB3 acts as a receptor for Coxsackievirus A9. Its function is as follows. (Microbial infection) Acts as a receptor for Hantaan virus. In terms of biological role, (Microbial infection) Integrin ITGAV:ITGB3 acts as a receptor for Cytomegalovirus/HHV-5. (Microbial infection) Integrin ITGA5:ITGB3 acts as a receptor for Human metapneumovirus. Functionally, (Microbial infection) Integrin ITGAV:ITGB3 acts aP05556s a receptor for Human parechovirus 1. Its function is as follows. (Microbial infection) Integrin ITGAV:ITGB3 acts as a receptor for West nile virus. In terms of biological role, (Microbial infection) In case of HIV-1 infection, the interaction with extracellular viral Tat protein seems to enhance angiogenesis in Kaposi's sarcoma lesions. The polypeptide is Integrin beta-3 (Homo sapiens (Human)).